A 151-amino-acid polypeptide reads, in one-letter code: Ribosome-binding factor A (151 aa).

Residues Arg-120 to Glu-151 are disordered.

It belongs to the RbfA family. As to quaternary structure, monomer. Binds 30S ribosomal subunits, but not 50S ribosomal subunits or 70S ribosomes.

Its subcellular location is the cytoplasm. Functionally, one of several proteins that assist in the late maturation steps of the functional core of the 30S ribosomal subunit. Associates with free 30S ribosomal subunits (but not with 30S subunits that are part of 70S ribosomes or polysomes). Required for efficient processing of 16S rRNA. May interact with the 5'-terminal helix region of 16S rRNA. The sequence is that of Ribosome-binding factor A from Xanthobacter autotrophicus (strain ATCC BAA-1158 / Py2).